The following is a 145-amino-acid chain: uncharacterized protein (145 aa).

The N-terminal stretch at 1-22 is a signal peptide; sequence MLTRLVLSAHLSSTTSPPWTHA. A glycan (N-linked (GlcNAc...) asparagine) is linked at Asn98. Positions 103-145 are disordered; sequence SSGQQRQAARQEEENSICKAHDSREGRLGYPLSAHQPGSGGPN.

It is found in the secreted. This is an uncharacterized protein from Homo sapiens (Human).